A 385-amino-acid polypeptide reads, in one-letter code: Homoserine O-succinyltransferase (385 aa).

The AB hydrolase-1 domain occupies 45 to 355 (NAVLVCHALN…PHGHDAFLLD (311 aa)). The Nucleophile role is filled by Ser-151. Arg-221 provides a ligand contact to substrate. Residues Asp-316 and His-349 contribute to the active site. Residue Asp-350 participates in substrate binding.

This sequence belongs to the AB hydrolase superfamily. MetX family. Homodimer.

The protein resides in the cytoplasm. It carries out the reaction L-homoserine + succinyl-CoA = O-succinyl-L-homoserine + CoA. It participates in amino-acid biosynthesis; L-methionine biosynthesis via de novo pathway; O-succinyl-L-homoserine from L-homoserine: step 1/1. Its function is as follows. Transfers a succinyl group from succinyl-CoA to L-homoserine, forming succinyl-L-homoserine. The chain is Homoserine O-succinyltransferase from Janthinobacterium sp. (strain Marseille) (Minibacterium massiliensis).